A 306-amino-acid chain; its full sequence is Ribonuclease Z (306 aa).

His63, His65, Asp67, His68, His141, Asp211, and His269 together coordinate Zn(2+). Asp67 acts as the Proton acceptor in catalysis.

It belongs to the RNase Z family. As to quaternary structure, homodimer. Requires Zn(2+) as cofactor.

It catalyses the reaction Endonucleolytic cleavage of RNA, removing extra 3' nucleotides from tRNA precursor, generating 3' termini of tRNAs. A 3'-hydroxy group is left at the tRNA terminus and a 5'-phosphoryl group is left at the trailer molecule.. Functionally, zinc phosphodiesterase, which displays some tRNA 3'-processing endonuclease activity. Probably involved in tRNA maturation, by removing a 3'-trailer from precursor tRNA. This Staphylococcus aureus (strain Mu3 / ATCC 700698) protein is Ribonuclease Z.